An 85-amino-acid polypeptide reads, in one-letter code: 4-hydroxyphenylacetate decarboxylase small subunit (85 aa).

The [4Fe-4S] cluster site is built by H4, C7, C20, C34, C43, C46, C60, and C78.

It belongs to the HPA decarboxylase small subunit family. Heterooctamer consisting of 4 large (HpdB) subunits and 4 small (HpdC) subunits, arranged as a tetramer of heterodimers. It depends on [4Fe-4S] cluster as a cofactor.

It catalyses the reaction 4-hydroxyphenylacetate + H(+) = 4-methylphenol + CO2. The enzyme catalyses 3,4-dihydroxyphenylacetate + H(+) = 4-methylcatechol + CO2. Its function is as follows. Component of the HPA decarboxylase that decarboxylates phenylacetates with a hydroxyl group in the p-position. Active toward 4-hydroxyphenylacetate and 3,4-dihydroxyphenylacetate, forming 4-methylphenol and 4-methylcatechol, respectively. Is likely involved in the catabolism of aromatic amino acids such as tyrosine fermentation. 4-methylphenol (p-cresol) formation provides metabolic toxicity, which allows an active suppression of other microbes and may provide growth advantages for the producers in highly competitive environments. The small subunit is essential for enzymatic activity of HPA decarboxylase, and also seems to be involved in the regulation of the enzyme oligomeric state and catalytic activity. This Clostridioides difficile (strain CD196) (Peptoclostridium difficile) protein is 4-hydroxyphenylacetate decarboxylase small subunit.